A 213-amino-acid polypeptide reads, in one-letter code: Pyrrolidone-carboxylate peptidase (213 aa).

Residues Glu-78, Cys-141, and His-165 contribute to the active site.

The protein belongs to the peptidase C15 family. In terms of assembly, homotetramer.

Its subcellular location is the cytoplasm. It carries out the reaction Release of an N-terminal pyroglutamyl group from a polypeptide, the second amino acid generally not being Pro.. Its function is as follows. Removes 5-oxoproline from various penultimate amino acid residues except L-proline. This Clostridium perfringens (strain SM101 / Type A) protein is Pyrrolidone-carboxylate peptidase.